A 663-amino-acid chain; its full sequence is Guanine nucleotide exchange factor subunit RGP1 (663 aa).

A phosphoserine mark is found at serine 351, serine 354, serine 357, serine 363, serine 364, and serine 370. Positions 412–443 (GKDEDSSDPEPNDSHFSNEMVTSAESSLRSDA) are disordered. Residues 426-440 (HFSNEMVTSAESSLR) are compositionally biased toward polar residues.

This sequence belongs to the RGP1 family. In terms of assembly, forms a complex with RIC1.

The protein localises to the golgi apparatus. In terms of biological role, the RIC1-RGP1 complex acts as a guanine nucleotide exchange factor (GEF), which activates YPT6 by exchanging bound GDP for free GTP. It is thereby required for efficient fusion of endosome-derived vesicles with the Golgi. The RIC1-RGP1 participates in the recycling of SNC1, presumably by mediating fusion of endosomal vesicles with the Golgi compartment. Required for proper mitotic growth. This is Guanine nucleotide exchange factor subunit RGP1 from Saccharomyces cerevisiae (strain ATCC 204508 / S288c) (Baker's yeast).